The primary structure comprises 293 residues: Nitrogenase iron protein (293 aa).

Residue 10-17 (GKGGIGKS) coordinates ATP. Cysteine 98 lines the [4Fe-4S] cluster pocket. Position 101 is an ADP-ribosylarginine; by dinitrogenase reductase ADP-ribosyltransferase (arginine 101). Cysteine 133 is a [4Fe-4S] cluster binding site.

This sequence belongs to the NifH/BchL/ChlL family. In terms of assembly, homodimer. Requires [4Fe-4S] cluster as cofactor. The reversible ADP-ribosylation of Arg-101 inactivates the nitrogenase reductase and regulates nitrogenase activity.

The catalysed reaction is N2 + 8 reduced [2Fe-2S]-[ferredoxin] + 16 ATP + 16 H2O = H2 + 8 oxidized [2Fe-2S]-[ferredoxin] + 2 NH4(+) + 16 ADP + 16 phosphate + 6 H(+). Functionally, the key enzymatic reactions in nitrogen fixation are catalyzed by the nitrogenase complex, which has 2 components: the iron protein and the molybdenum-iron protein. This Klebsiella pneumoniae (strain 342) protein is Nitrogenase iron protein.